A 398-amino-acid polypeptide reads, in one-letter code: DNA-directed RNA polymerase III subunit RPC4 (398 aa).

Residues 1-114 are disordered; the sequence is MSEGNAAGEP…SHSIFEQGPA (114 aa). The residue at position 2 (serine 2) is an N-acetylserine. Serine 42 carries the phosphoserine modification. Residues 66 to 100 are compositionally biased toward basic and acidic residues; sequence KIKEEPKEEVTVKKEKRERDRDRQREGHGRGRGRP. Glycyl lysine isopeptide (Lys-Gly) (interchain with G-Cter in SUMO2) cross-links involve residues lysine 68 and lysine 78. Omega-N-methylarginine is present on residues arginine 95, arginine 97, and arginine 99. Residues lysine 141, lysine 152, lysine 160, lysine 190, lysine 199, lysine 206, lysine 220, lysine 285, lysine 302, lysine 310, and lysine 396 each participate in a glycyl lysine isopeptide (Lys-Gly) (interchain with G-Cter in SUMO2) cross-link. The interval 220–244 is disordered; that stretch reads KEEPRDEEEEAKMKAPPKAARKTPG.

Belongs to the eukaryotic RPC4/POLR3D RNA polymerase subunit family. As to quaternary structure, component of the RNA polymerase III complex consisting of 17 subunits: a ten-subunit horseshoe-shaped catalytic core composed of POLR3A/RPC1, POLR3B/RPC2, POLR1C/RPAC1, POLR1D/RPAC2, POLR3K/RPC10, POLR2E/RPABC1, POLR2F/RPABC2, POLR2H/RPABC3, POLR2K/RPABC4 and POLR2L/RPABC5; a mobile stalk composed of two subunits POLR3H/RPC8 and CRCP/RPC9, protruding from the core and functioning primarily in transcription initiation; and additional subunits homologous to general transcription factors of the RNA polymerase II machinery, POLR3C/RPC3-POLR3F/RPC6-POLR3G/RPC7 heterotrimer required for transcription initiation and POLR3D/RPC4-POLR3E/RPC5 heterodimer involved in both transcription initiation and termination. Post-translationally, sumoylation on Lys-141 can serve as a signal to mark misfolded Pol III for proteasomal degradation.

It is found in the nucleus. Functionally, DNA-dependent RNA polymerase catalyzes the transcription of DNA into RNA using the four ribonucleoside triphosphates as substrates. Specific peripheric component of RNA polymerase III (Pol III) which synthesizes small non-coding RNAs including 5S rRNA, snRNAs, tRNAs and miRNAs from at least 500 distinct genomic loci. Assembles with POLR3E/RPC5 forming a subcomplex that binds the Pol III core. Enables recruitment of Pol III at transcription initiation site and drives transcription initiation from both type 2 and type 3 DNA promoters. Required for efficient transcription termination and reinitiation. Pol III plays a key role in sensing and limiting infection by intracellular bacteria and DNA viruses. Acts as nuclear and cytosolic DNA sensor involved in innate immune response. Can sense non-self dsDNA that serves as template for transcription into dsRNA. The non-self RNA polymerase III transcripts, such as Epstein-Barr virus-encoded RNAs (EBERs) induce type I interferon and NF-kappa-B through the RIG-I pathway. The protein is DNA-directed RNA polymerase III subunit RPC4 of Homo sapiens (Human).